The primary structure comprises 501 residues: L-arabinose isomerase (501 aa).

Residues Glu-307, Glu-334, His-351, and His-450 each coordinate Mn(2+).

The protein belongs to the arabinose isomerase family. The cofactor is Mn(2+).

The enzyme catalyses beta-L-arabinopyranose = L-ribulose. The protein operates within carbohydrate degradation; L-arabinose degradation via L-ribulose; D-xylulose 5-phosphate from L-arabinose (bacterial route): step 1/3. In terms of biological role, catalyzes the conversion of L-arabinose to L-ribulose. This Acidothermus cellulolyticus (strain ATCC 43068 / DSM 8971 / 11B) protein is L-arabinose isomerase.